A 917-amino-acid chain; its full sequence is Transcription factor E2F8 (917 aa).

A disordered region spans residues Met1–Leu122. 2 stretches are compositionally biased toward polar residues: residues Leu16–Lys27 and Pro37–Glu48. Residues Ile93–Asp103 show a composition bias toward basic and acidic residues. Positions Ser105–Glu117 are enriched in acidic residues. The DNA-binding element occupies Arg126–Gly195. Disordered regions lie at residues Gln221–Asp252, Pro353–Ser386, Glu461–Ile497, Val556–Pro615, Leu671–Lys698, and Gly813–Gly834. Acidic residues predominate over residues Glu233–Asp252. Residues Arg273–Gly359 mediate DNA binding. The span at Ile371–Ser386 shows a compositional bias: polar residues. Composition is skewed to low complexity over residues Ser475–Ser488 and Thr568–Ser578. Positions Glu595–Met605 are enriched in polar residues. A compositionally biased stretch (polar residues) spans Val815–Ser830.

Belongs to the E2F/DP family. As to quaternary structure, homodimer and heterodimer: mainly forms homodimers and, to a lesser extent, heterodimers with e2f7.

Its subcellular location is the nucleus. Functionally, atypical E2F transcription factor that participates in various processes such as angiogenesis and polyploidization of specialized cells. Mainly acts as a transcription repressor that binds DNA independently of DP proteins and specifically recognizes the E2 recognition site 5'-TTTC[CG]CGC-3'. Directly represses transcription of classical E2F transcription factors such as e2f1. Acts as a regulator of S-phase by recognizing and binding the E2-related site 5'-TTCCCGCC-3' and mediating repression of G1/S-regulated genes. Acts as a promoter of sprouting angiogenesis, possibly by acting as a transcription activator and promoting expression of vegfa. The protein is Transcription factor E2F8 (e2f8) of Danio rerio (Zebrafish).